The primary structure comprises 314 residues: Signal peptidase I (314 aa).

Residues 5–25 (LTIFLLISTLVTGIFWSFYCI) traverse the membrane as a helical segment. Residues 26–63 (KSFKNYLINKKIINNNNFHQEKIEKSKNKTYFLKSLAS) lie on the Cytoplasmic side of the membrane. Residues 64–84 (FFPIFLAIFIIRSFIYEPFQI) form a helical membrane-spanning segment. Residues 85–314 (PSGSMMPTLL…IRINRIGSIH (230 aa)) are Extracellular-facing. Active-site residues include Ser-88 and Lys-143.

This sequence belongs to the peptidase S26 family.

The protein resides in the cell membrane. The catalysed reaction is Cleavage of hydrophobic, N-terminal signal or leader sequences from secreted and periplasmic proteins.. The sequence is that of Signal peptidase I (lepB) from Buchnera aphidicola subsp. Acyrthosiphon pisum (strain APS) (Acyrthosiphon pisum symbiotic bacterium).